The chain runs to 504 residues: Chorion-specific transcription factor GCMb (504 aa).

The segment at residues 19–174 (LTWDINDPQM…KSETEGRRSA (156 aa)) is a DNA-binding region (GCM). Zn(2+)-binding residues include Cys-81, Cys-87, Cys-91, Cys-118, Cys-121, Cys-130, His-157, and His-159. 2 stretches are compositionally biased toward basic and acidic residues: residues 155 to 172 (GVHD…EGRR) and 188 to 203 (RRSE…DIRG). Positions 155–203 (GVHDHPRPESKSETEGRRSALKRQMASFYQPQKRRSEEPEARSTQDIRG) are disordered. The interval 379–393 (LQTVITTTVAYQAYQ) is C-terminal conserved inhibitory domain (CCID). The segment at 438–472 (ASPSGRAPLKVPGDCQAPRPTLDFPQEADPSGTDG) is disordered.

It localises to the nucleus. Functionally, transcription factor that binds specific sequences on gene promoters and activate their transcription. Through the regulation of gene transcription, may play a role in parathyroid gland development. The protein is Chorion-specific transcription factor GCMb of Mus musculus (Mouse).